Reading from the N-terminus, the 168-residue chain is Ribosome maturation factor RimM (168 aa).

The region spanning 95 to 168 (EEGYYWSDLI…RITVDWGLDY (74 aa)) is the PRC barrel domain.

It belongs to the RimM family. As to quaternary structure, binds ribosomal protein uS19.

The protein resides in the cytoplasm. Its function is as follows. An accessory protein needed during the final step in the assembly of 30S ribosomal subunit, possibly for assembly of the head region. Essential for efficient processing of 16S rRNA. May be needed both before and after RbfA during the maturation of 16S rRNA. It has affinity for free ribosomal 30S subunits but not for 70S ribosomes. The chain is Ribosome maturation factor RimM from Nitrosospira multiformis (strain ATCC 25196 / NCIMB 11849 / C 71).